The primary structure comprises 644 residues: Biosynthetic arginine decarboxylase (644 aa).

An N6-(pyridoxal phosphate)lysine modification is found at lysine 105. Residue 287 to 297 participates in substrate binding; sequence LDVGGGLGIDY.

It belongs to the Orn/Lys/Arg decarboxylase class-II family. SpeA subfamily. Requires Mg(2+) as cofactor. The cofactor is pyridoxal 5'-phosphate.

It carries out the reaction L-arginine + H(+) = agmatine + CO2. Its function is as follows. Catalyzes the biosynthesis of agmatine from arginine. This Parasynechococcus marenigrum (strain WH8102) protein is Biosynthetic arginine decarboxylase.